A 428-amino-acid polypeptide reads, in one-letter code: Kynureninase (428 aa).

Residues Thr104, Thr105, 132–135, Asp213, His216, and Tyr238 contribute to the pyridoxal 5'-phosphate site; that span reads FPSD. N6-(pyridoxal phosphate)lysine is present on Lys239. Pyridoxal 5'-phosphate is bound by residues Trp267 and Thr295.

Belongs to the kynureninase family. In terms of assembly, homodimer. The cofactor is pyridoxal 5'-phosphate.

It catalyses the reaction L-kynurenine + H2O = anthranilate + L-alanine + H(+). The enzyme catalyses 3-hydroxy-L-kynurenine + H2O = 3-hydroxyanthranilate + L-alanine + H(+). It functions in the pathway amino-acid degradation; L-kynurenine degradation; L-alanine and anthranilate from L-kynurenine: step 1/1. It participates in cofactor biosynthesis; NAD(+) biosynthesis; quinolinate from L-kynurenine: step 2/3. Catalyzes the cleavage of L-kynurenine (L-Kyn) and L-3-hydroxykynurenine (L-3OHKyn) into anthranilic acid (AA) and 3-hydroxyanthranilic acid (3-OHAA), respectively. This Bacillus thuringiensis subsp. konkukian (strain 97-27) protein is Kynureninase.